We begin with the raw amino-acid sequence, 347 residues long: Histidinol-phosphate aminotransferase (347 aa).

Lysine 209 carries the post-translational modification N6-(pyridoxal phosphate)lysine.

The protein belongs to the class-II pyridoxal-phosphate-dependent aminotransferase family. Histidinol-phosphate aminotransferase subfamily. As to quaternary structure, homodimer. Pyridoxal 5'-phosphate serves as cofactor.

It carries out the reaction L-histidinol phosphate + 2-oxoglutarate = 3-(imidazol-4-yl)-2-oxopropyl phosphate + L-glutamate. The protein operates within amino-acid biosynthesis; L-histidine biosynthesis; L-histidine from 5-phospho-alpha-D-ribose 1-diphosphate: step 7/9. This is Histidinol-phosphate aminotransferase from Geotalea uraniireducens (strain Rf4) (Geobacter uraniireducens).